The primary structure comprises 564 residues: Proline--tRNA ligase (564 aa).

This sequence belongs to the class-II aminoacyl-tRNA synthetase family. ProS type 1 subfamily. As to quaternary structure, homodimer.

It localises to the cytoplasm. It catalyses the reaction tRNA(Pro) + L-proline + ATP = L-prolyl-tRNA(Pro) + AMP + diphosphate. Its function is as follows. Catalyzes the attachment of proline to tRNA(Pro) in a two-step reaction: proline is first activated by ATP to form Pro-AMP and then transferred to the acceptor end of tRNA(Pro). As ProRS can inadvertently accommodate and process non-cognate amino acids such as alanine and cysteine, to avoid such errors it has two additional distinct editing activities against alanine. One activity is designated as 'pretransfer' editing and involves the tRNA(Pro)-independent hydrolysis of activated Ala-AMP. The other activity is designated 'posttransfer' editing and involves deacylation of mischarged Ala-tRNA(Pro). The misacylated Cys-tRNA(Pro) is not edited by ProRS. The protein is Proline--tRNA ligase of Xylella fastidiosa (strain Temecula1 / ATCC 700964).